The chain runs to 61 residues: Small ribosomal subunit protein uS14B (61 aa).

Zn(2+) is bound by residues Cys24, Cys27, Cys40, and Cys43.

Belongs to the universal ribosomal protein uS14 family. Zinc-binding uS14 subfamily. As to quaternary structure, part of the 30S ribosomal subunit. Contacts proteins S3 and S10. Zn(2+) is required as a cofactor.

Binds 16S rRNA, required for the assembly of 30S particles and may also be responsible for determining the conformation of the 16S rRNA at the A site. This is Small ribosomal subunit protein uS14B from Staphylococcus epidermidis (strain ATCC 35984 / DSM 28319 / BCRC 17069 / CCUG 31568 / BM 3577 / RP62A).